Consider the following 146-residue polypeptide: Large ribosomal subunit protein bL9 (146 aa).

This sequence belongs to the bacterial ribosomal protein bL9 family.

Its function is as follows. Binds to the 23S rRNA. This chain is Large ribosomal subunit protein bL9, found in Nautilia profundicola (strain ATCC BAA-1463 / DSM 18972 / AmH).